Consider the following 255-residue polypeptide: 4-hydroxy-tetrahydrodipicolinate reductase (255 aa).

NAD(+) contacts are provided by residues 9–14, Asp35, 89–91, and 115–118; these read GFKGKM, GTT, and APNF. His145 acts as the Proton donor/acceptor in catalysis. Residue His146 coordinates (S)-2,3,4,5-tetrahydrodipicolinate. Lys149 serves as the catalytic Proton donor. 155 to 156 serves as a coordination point for (S)-2,3,4,5-tetrahydrodipicolinate; the sequence is GT.

The protein belongs to the DapB family.

The protein localises to the cytoplasm. It carries out the reaction (S)-2,3,4,5-tetrahydrodipicolinate + NAD(+) + H2O = (2S,4S)-4-hydroxy-2,3,4,5-tetrahydrodipicolinate + NADH + H(+). It catalyses the reaction (S)-2,3,4,5-tetrahydrodipicolinate + NADP(+) + H2O = (2S,4S)-4-hydroxy-2,3,4,5-tetrahydrodipicolinate + NADPH + H(+). It participates in amino-acid biosynthesis; L-lysine biosynthesis via DAP pathway; (S)-tetrahydrodipicolinate from L-aspartate: step 4/4. In terms of biological role, catalyzes the conversion of 4-hydroxy-tetrahydrodipicolinate (HTPA) to tetrahydrodipicolinate. This is 4-hydroxy-tetrahydrodipicolinate reductase from Streptococcus pneumoniae serotype 19F (strain G54).